Reading from the N-terminus, the 1038-residue chain is Importin-7 (1038 aa).

Residue Met-1 is modified to N-acetylmethionine. An Importin N-terminal domain is found at 22 to 101 (AERQLNEAHK…RENIVEAIIH (80 aa)). Residues 881–910 (EHENDSDDDDEAEDDDETEELGSDEDDIDE) form a disordered region. Residues 884–910 (NDSDDDDEAEDDDETEELGSDEDDIDE) are compositionally biased toward acidic residues. Ser-886 is modified (phosphoserine). Residue Thr-898 is modified to Phosphothreonine. Residues Ser-903 and Ser-1020 each carry the phosphoserine modification.

This sequence belongs to the importin beta family. As to quaternary structure, forms a heterodimer with KPNB1. Interacts with histone H1. Interacts with H2A, H2B, H3 and H4 histones. Interacts with SNUPN and XPO1. Interacts with RPS7 and RPL5. Interacts with RPL23A (via BIB domain). Binds directly to nuclear pore complexes. Interacts with SMAD4 and NUP93; translocates SMAD4 to the nucleus through the NPC upon BMP7 stimulation resulting in activation of SMAD4 signaling. Interacts with phosphorylated SMAD2; the interaction facilitates translocation of SMAD2 to the nucleus. Interacts with SRP19. Interacts with RUNX2; the interaction inhibits RUNX2 nuclear translocation in osteoblasts. Interacts with HDAC6, DLX3 and KLF4; the interaction facilitates HDAC6, DLX3 and KLF4 nuclear translocation in dental papilla cells. In terms of assembly, (Microbial infection) Interacts with HIV-1 reverse transcription complex integrase and rev.

The protein resides in the cytoplasm. It localises to the nucleus. Functions in nuclear protein import, either by acting as autonomous nuclear transport receptor or as an adapter-like protein in association with the importin-beta subunit KPNB1. Acting autonomously, is thought to serve itself as receptor for nuclear localization signals (NLS) and to promote translocation of import substrates through the nuclear pore complex (NPC) by an energy requiring, Ran-dependent mechanism. At the nucleoplasmic side of the NPC, Ran binds to importin, the importin/substrate complex dissociates and importin is re-exported from the nucleus to the cytoplasm where GTP hydrolysis releases Ran. The directionality of nuclear import is thought to be conferred by an asymmetric distribution of the GTP- and GDP-bound forms of Ran between the cytoplasm and nucleus. Mediates autonomously the nuclear import of ribosomal proteins RPL23A, RPS7 and RPL5. In association with KPNB1 mediates the nuclear import of H1 histone and the Ran-binding site of IPO7 is not required but synergizes with that of KPNB1 in importin/substrate complex dissociation. Promotes odontoblast differentiation via promoting nuclear translocation of DLX3, KLF4, SMAD2, thereby facilitating the transcription of target genes that play a role in odontoblast differentiation. Facilitates BMP4-induced translocation of SMAD1 to the nucleus and recruitment to the MSX1 gene promoter, thereby promotes the expression of the odontogenic regulator MSX1 in dental mesenchymal cells. Also promotes odontoblast differentiation by facilitating the nuclear translocation of HDAC6 and subsequent repression of RUNX2 expression. Inhibits osteoblast differentiation by inhibiting nuclear translocation of RUNX2 and therefore inhibition of RUNX2 target gene transcription. In vitro, mediates nuclear import of H2A, H2B, H3 and H4 histones. Functionally, (Microbial infection) Mediates the nuclear import of HIV-1 reverse transcription complex (RTC) integrase. Binds and mediates the nuclear import of HIV-1 Rev. The chain is Importin-7 (IPO7) from Homo sapiens (Human).